A 332-amino-acid chain; its full sequence is L-lactate dehydrogenase A chain (332 aa).

NAD(+) is bound by residues 29–57 (GMVGMASAISILLKDLCDELALVDVMEDK) and Arg-99. Positions 106, 138, and 169 each coordinate substrate. Asn-138 contributes to the NAD(+) binding site. The active-site Proton acceptor is His-193. A substrate-binding site is contributed by Thr-248.

Belongs to the LDH/MDH superfamily. LDH family. As to quaternary structure, homotetramer.

The protein resides in the cytoplasm. It carries out the reaction (S)-lactate + NAD(+) = pyruvate + NADH + H(+). Its pathway is fermentation; pyruvate fermentation to lactate; (S)-lactate from pyruvate: step 1/1. Functionally, interconverts simultaneously and stereospecifically pyruvate and lactate with concomitant interconversion of NADH and NAD(+). In Rhinogobiops nicholsii (Blackeye goby), this protein is L-lactate dehydrogenase A chain (ldha).